We begin with the raw amino-acid sequence, 334 residues long: tRNA-dihydrouridine(20/20a) synthase (334 aa).

FMN is bound by residues 18–20 (PMM) and Gln-71. The active-site Proton donor is Cys-101. FMN is bound by residues Lys-140, His-172, 212-214 (NGG), and 234-235 (GR).

This sequence belongs to the Dus family. DusA subfamily. FMN is required as a cofactor.

It catalyses the reaction 5,6-dihydrouridine(20) in tRNA + NADP(+) = uridine(20) in tRNA + NADPH + H(+). The catalysed reaction is 5,6-dihydrouridine(20) in tRNA + NAD(+) = uridine(20) in tRNA + NADH + H(+). It carries out the reaction 5,6-dihydrouridine(20a) in tRNA + NADP(+) = uridine(20a) in tRNA + NADPH + H(+). The enzyme catalyses 5,6-dihydrouridine(20a) in tRNA + NAD(+) = uridine(20a) in tRNA + NADH + H(+). In terms of biological role, catalyzes the synthesis of 5,6-dihydrouridine (D), a modified base found in the D-loop of most tRNAs, via the reduction of the C5-C6 double bond in target uridines. Specifically modifies U20 and U20a in tRNAs. In Xanthomonas axonopodis pv. citri (strain 306), this protein is tRNA-dihydrouridine(20/20a) synthase.